Here is a 386-residue protein sequence, read N- to C-terminus: SET and MYND domain-containing protein DDB_G0273589 (386 aa).

One can recognise an SET domain in the interval 6 to 294 (NGLELKSSEN…KGDQLTISYI (289 aa)). The MYND-type zinc-finger motif lies at 51–94 (CFNCIKQLPSVIKLSLKCNQCNEIWYCNEQCKNENINKHQHYEC). A coiled-coil region spans residues 136–171 (NNKFIEQQLNNNNNNNNDNEQLTNTLDDVFDLVENQ).

It belongs to the class V-like SAM-binding methyltransferase superfamily.

In terms of biological role, probable methyltransferase. In Dictyostelium discoideum (Social amoeba), this protein is SET and MYND domain-containing protein DDB_G0273589.